Reading from the N-terminus, the 98-residue chain is NADH-ubiquinone oxidoreductase chain 4L (98 aa).

Helical transmembrane passes span 2 to 22 (PSIF…TLVF), 29 to 49 (SLLC…LIIL), and 61 to 81 (ILLL…LVMV).

The protein belongs to the complex I subunit 4L family. Core subunit of respiratory chain NADH dehydrogenase (Complex I) which is composed of 45 different subunits.

The protein localises to the mitochondrion inner membrane. It carries out the reaction a ubiquinone + NADH + 5 H(+)(in) = a ubiquinol + NAD(+) + 4 H(+)(out). Functionally, core subunit of the mitochondrial membrane respiratory chain NADH dehydrogenase (Complex I) which catalyzes electron transfer from NADH through the respiratory chain, using ubiquinone as an electron acceptor. Part of the enzyme membrane arm which is embedded in the lipid bilayer and involved in proton translocation. This is NADH-ubiquinone oxidoreductase chain 4L (MT-ND4L) from Propithecus tattersalli (Golden-crowned Sifaka).